Here is a 324-residue protein sequence, read N- to C-terminus: Galactosylgalactosylxylosylprotein 3-beta-glucuronosyltransferase 2 (324 aa).

Residues 1-2 lie on the Cytoplasmic side of the membrane; the sequence is MK. The helical; Signal-anchor for type II membrane protein transmembrane segment at 3-23 threads the bilayer; sequence SALCSRFFILLPWILIVIIML. Over 24 to 324 the chain is Lumenal; that stretch reads DVDPRRPAPQ…YHLDTVNIEV (301 aa). The interval 50–78 is disordered; that stretch reads SRVPLRRSSPGRDAAEKRNESRPQLQPEP. Asparagine 68 carries an N-linked (GlcNAc...) asparagine glycan. UDP-alpha-D-glucuronate-binding positions include 88–90, aspartate 119, arginine 156, arginine 161, and 186–188; these read PTY and DDD. A Mn(2+)-binding site is contributed by aspartate 188. The segment at 235-244 is interaction with galactose moiety of substrate glycoprotein; sequence WREDRPFAID. Glutamate 274 serves as the catalytic Proton donor/acceptor. Residue asparagine 293 is glycosylated (N-linked (GlcNAc...) asparagine). 301–303 is a UDP-alpha-D-glucuronate binding site; sequence HTR.

Belongs to the glycosyltransferase 43 family. As to quaternary structure, homodimer. Mn(2+) is required as a cofactor. Expressed in brain, but not in liver and kidney.

The protein localises to the golgi apparatus membrane. It catalyses the reaction 3-O-(beta-D-galactosyl-(1-&gt;3)-beta-D-galactosyl-(1-&gt;4)-beta-D-xylosyl)-L-seryl-[protein] + UDP-alpha-D-glucuronate = 3-O-(beta-D-GlcA-(1-&gt;3)-beta-D-Gal-(1-&gt;3)-beta-D-Gal-(1-&gt;4)-beta-D-Xyl)-L-seryl-[protein] + UDP + H(+). The protein operates within protein modification; protein glycosylation. In terms of biological role, involved in the biosynthesis of L2/HNK-1 carbohydrate epitope on both glycolipids and glycoproteins. This is Galactosylgalactosylxylosylprotein 3-beta-glucuronosyltransferase 2 (B3gat2) from Mus musculus (Mouse).